We begin with the raw amino-acid sequence, 97 residues long: Co-chaperonin GroES (97 aa).

It belongs to the GroES chaperonin family. As to quaternary structure, heptamer of 7 subunits arranged in a ring. Interacts with the chaperonin GroEL.

Its subcellular location is the cytoplasm. In terms of biological role, together with the chaperonin GroEL, plays an essential role in assisting protein folding. The GroEL-GroES system forms a nano-cage that allows encapsulation of the non-native substrate proteins and provides a physical environment optimized to promote and accelerate protein folding. GroES binds to the apical surface of the GroEL ring, thereby capping the opening of the GroEL channel. The sequence is that of Co-chaperonin GroES from Buchnera aphidicola subsp. Tetraneura caerulescens.